The chain runs to 175 residues: Inorganic pyrophosphatase (175 aa).

Positions 30, 44, and 56 each coordinate substrate. Asp-66, Asp-71, and Asp-103 together coordinate Mg(2+). Tyr-142 lines the substrate pocket.

Belongs to the PPase family. Homohexamer. Requires Mg(2+) as cofactor.

Its subcellular location is the cytoplasm. The catalysed reaction is diphosphate + H2O = 2 phosphate + H(+). Its function is as follows. Catalyzes the hydrolysis of inorganic pyrophosphate (PPi) forming two phosphate ions. This Yersinia pestis protein is Inorganic pyrophosphatase.